The primary structure comprises 949 residues: Glycine dehydrogenase (decarboxylating) (949 aa).

At lysine 697 the chain carries N6-(pyridoxal phosphate)lysine.

It belongs to the GcvP family. The glycine cleavage system is composed of four proteins: P, T, L and H. The cofactor is pyridoxal 5'-phosphate.

It carries out the reaction N(6)-[(R)-lipoyl]-L-lysyl-[glycine-cleavage complex H protein] + glycine + H(+) = N(6)-[(R)-S(8)-aminomethyldihydrolipoyl]-L-lysyl-[glycine-cleavage complex H protein] + CO2. Its function is as follows. The glycine cleavage system catalyzes the degradation of glycine. The P protein binds the alpha-amino group of glycine through its pyridoxal phosphate cofactor; CO(2) is released and the remaining methylamine moiety is then transferred to the lipoamide cofactor of the H protein. The sequence is that of Glycine dehydrogenase (decarboxylating) from Deinococcus radiodurans (strain ATCC 13939 / DSM 20539 / JCM 16871 / CCUG 27074 / LMG 4051 / NBRC 15346 / NCIMB 9279 / VKM B-1422 / R1).